A 343-amino-acid chain; its full sequence is Biotin synthase (343 aa).

The Radical SAM core domain maps to 36 to 254; that stretch reads NTIQISTLLS…IAVARIMMPK (219 aa). Residues cysteine 51, cysteine 55, and cysteine 58 each coordinate [4Fe-4S] cluster. The [2Fe-2S] cluster site is built by cysteine 95, cysteine 126, cysteine 186, and arginine 258.

Belongs to the radical SAM superfamily. Biotin synthase family. As to quaternary structure, homodimer. The cofactor is [4Fe-4S] cluster. Requires [2Fe-2S] cluster as cofactor.

The enzyme catalyses (4R,5S)-dethiobiotin + (sulfur carrier)-SH + 2 reduced [2Fe-2S]-[ferredoxin] + 2 S-adenosyl-L-methionine = (sulfur carrier)-H + biotin + 2 5'-deoxyadenosine + 2 L-methionine + 2 oxidized [2Fe-2S]-[ferredoxin]. It participates in cofactor biosynthesis; biotin biosynthesis; biotin from 7,8-diaminononanoate: step 2/2. Functionally, catalyzes the conversion of dethiobiotin (DTB) to biotin by the insertion of a sulfur atom into dethiobiotin via a radical-based mechanism. The polypeptide is Biotin synthase (Buchnera aphidicola subsp. Acyrthosiphon pisum (strain APS) (Acyrthosiphon pisum symbiotic bacterium)).